Consider the following 475-residue polypeptide: Ribulose bisphosphate carboxylase large chain (475 aa).

2 residues coordinate substrate: N123 and T173. Catalysis depends on K175, which acts as the Proton acceptor. Position 177 (K177) interacts with substrate. K201, D203, and E204 together coordinate Mg(2+). At K201 the chain carries N6-carboxylysine. Catalysis depends on H294, which acts as the Proton acceptor. Substrate contacts are provided by R295, H327, and S379.

Belongs to the RuBisCO large chain family. Type I subfamily. Heterohexadecamer of 8 large chains and 8 small chains; disulfide-linked. The disulfide link is formed within the large subunit homodimers. It depends on Mg(2+) as a cofactor. The disulfide bond which can form in the large chain dimeric partners within the hexadecamer appears to be associated with oxidative stress and protein turnover.

The protein resides in the plastid. It localises to the chloroplast. It carries out the reaction 2 (2R)-3-phosphoglycerate + 2 H(+) = D-ribulose 1,5-bisphosphate + CO2 + H2O. It catalyses the reaction D-ribulose 1,5-bisphosphate + O2 = 2-phosphoglycolate + (2R)-3-phosphoglycerate + 2 H(+). RuBisCO catalyzes two reactions: the carboxylation of D-ribulose 1,5-bisphosphate, the primary event in carbon dioxide fixation, as well as the oxidative fragmentation of the pentose substrate in the photorespiration process. Both reactions occur simultaneously and in competition at the same active site. This Euglena gracilis protein is Ribulose bisphosphate carboxylase large chain.